Here is a 422-residue protein sequence, read N- to C-terminus: Enolase (422 aa).

Residue Gln161 coordinates (2R)-2-phosphoglycerate. The active-site Proton donor is the Glu203. Asp240, Glu283, and Asp310 together coordinate Mg(2+). 4 residues coordinate (2R)-2-phosphoglycerate: Lys335, Arg364, Ser365, and Lys386. Lys335 (proton acceptor) is an active-site residue.

Belongs to the enolase family. It depends on Mg(2+) as a cofactor.

The protein localises to the cytoplasm. It localises to the secreted. Its subcellular location is the cell surface. The enzyme catalyses (2R)-2-phosphoglycerate = phosphoenolpyruvate + H2O. Its pathway is carbohydrate degradation; glycolysis; pyruvate from D-glyceraldehyde 3-phosphate: step 4/5. Catalyzes the reversible conversion of 2-phosphoglycerate (2-PG) into phosphoenolpyruvate (PEP). It is essential for the degradation of carbohydrates via glycolysis. This Deinococcus radiodurans (strain ATCC 13939 / DSM 20539 / JCM 16871 / CCUG 27074 / LMG 4051 / NBRC 15346 / NCIMB 9279 / VKM B-1422 / R1) protein is Enolase.